The sequence spans 368 residues: Endophilin-A2 (368 aa).

Residues 1 to 21 (MSVAGLKKQFYKASQLVSEKV) are membrane-binding amphipathic helix. The region spanning 18-249 (SEKVGGAEGT…LKRRMREASS (232 aa)) is the BAR domain. The segment at 60–87 (PNPASRAKLTMLNTVSKIRGQVKNPGYP) is required for dimerization upon membrane association. Positions 181-250 (EELRQAMEKF…KRRMREASSR (70 aa)) form a coiled coil. The segment at 218 to 254 (LVDAQLDYHRQAVQILDELADKLKRRMREASSRPKRE) is interaction with ARC. Residues 243-308 (RMREASSRPK…PSRSMPPLDQ (66 aa)) are disordered. The segment covering 245–263 (REASSRPKREYKPKPRELL) has biased composition (basic and acidic residues). S288 and S292 each carry phosphoserine. T298 carries the phosphothreonine modification. The SH3 domain occupies 306 to 365 (LDQPSCKALYDFEPENDGELGFHEGDIITLTNQIDENWYEGMLDGQSGFFPLSYVEVLVP). At Y315 the chain carries Phosphotyrosine.

Belongs to the endophilin family. As to quaternary structure, interacts with ARC, SYNJ1 and DNM1. Interacts with PDCD6IP. Interacts with BIN2.

It localises to the cytoplasm. The protein resides in the early endosome membrane. The protein localises to the cell projection. Its subcellular location is the podosome. Its function is as follows. Implicated in endocytosis. May recruit other proteins to membranes with high curvature. The protein is Endophilin-A2 of Bos taurus (Bovine).